The chain runs to 159 residues: Neuroglobin-2 (159 aa).

The Globin domain maps to 3 to 151 (KLTEKDKELI…VVAAMSRGWA (149 aa)). Heme b-binding residues include His66 and His98.

The protein belongs to the globin family. As to quaternary structure, monomer. Homodimers and homotetramers. Mainly monomeric but also detected as part of homodimers and homotetramers.

The protein resides in the cytoplasm. It localises to the cytosol. The protein localises to the mitochondrion matrix. The enzyme catalyses Fe(III)-heme b-[protein] + nitric oxide + H2O = Fe(II)-heme b-[protein] + nitrite + 2 H(+). Its function is as follows. Monomeric globin with a bis-histidyl six-coordinate heme-iron atom through which it can bind dioxygen, carbon monoxide and nitric oxide. Could help transport oxygen and increase its availability to the metabolically active neuronal tissues, though its low quantity in tissues as well as its high affinity for dioxygen, which may limit its oxygen-releasing ability, argue against it. The ferrous/deoxygenated form exhibits a nitrite reductase activity and it could produce nitric oxide which in turn inhibits cellular respiration in response to hypoxia. In its ferrous/deoxygenated state, it may also exhibit GDI (Guanine nucleotide Dissociation Inhibitor) activity toward heterotrimeric G-alpha proteins, thereby regulating signal transduction to facilitate neuroprotective responses in the wake of hypoxia and associated oxidative stress. The polypeptide is Neuroglobin-2 (ngb2) (Oncorhynchus mykiss (Rainbow trout)).